The following is a 284-amino-acid chain: 2-dehydro-3-deoxyphosphooctonate aldolase (284 aa).

Belongs to the KdsA family.

The protein resides in the cytoplasm. The catalysed reaction is D-arabinose 5-phosphate + phosphoenolpyruvate + H2O = 3-deoxy-alpha-D-manno-2-octulosonate-8-phosphate + phosphate. The protein operates within carbohydrate biosynthesis; 3-deoxy-D-manno-octulosonate biosynthesis; 3-deoxy-D-manno-octulosonate from D-ribulose 5-phosphate: step 2/3. Its pathway is bacterial outer membrane biogenesis; lipopolysaccharide biosynthesis. This Burkholderia cenocepacia (strain ATCC BAA-245 / DSM 16553 / LMG 16656 / NCTC 13227 / J2315 / CF5610) (Burkholderia cepacia (strain J2315)) protein is 2-dehydro-3-deoxyphosphooctonate aldolase.